The sequence spans 737 residues: MTISNTAKITPELVASHGLKPDEYERILKLIGREPSLTELGIFSAMWNEHCSYKSSRIHLKGLPTKAPWVLQGPGENAGVIDIGDNQAVVFKMESHNHPSFIEPYQGATTGVGGILRDVFTMGARPIACLNALSFGAPEHPKTRRLVSGVVAGVGGYGNSFGVPTVGGQVRFHTRYDGNILVNAMAVGLADADKIFLAAASGVGMPIVYLGSKTGRDGMGGATMASAEFDADSEEKRPTVQVGDPFAEKLLLEACLEIMANDCVIAIQDMGAAGLTCSAVEMGAKGDLGVDLDLDKVPTRETGMTAYEMMLSESQERMLMVLKPEKEALAEQIFKKWGLDFAIVGYTTPTKRFVVKHGGEVKADLPIKELGDEAPLYDRPHVPSPKLPVIHAREINAPLSVPDALEKLIGTPELCSRRWVWEQYDHVILGNTVQRPGGDAAVVRIEDGPKGLALTVDVTPRYCEADPVEGGKQAVAEAYRNVTAVGGKLLAITDNLNFGNPERPEIMGQLVGCLKGISEACIALDSPIVSGNVSLYNETNGRGILPTPSIGGVGLLDDFTKSATLAFKAADEAILLIGDTHGWLGQSVYLRDVCGREEGAPPPVDLAAEKRNGDVVRGMIHAGTATAVHDISDGGLLIALAEMAIAGGIGATLDPAPDSTVPHAWWFGEDQARYVVTVKQDDLLGVMTKLKTVGVPCTQIGITGGATLSIAGERAIEVTALETAHEAWLPAYMAAKN.

Residue His50 is part of the active site. ATP-binding residues include Tyr53 and Lys92. Glu94 provides a ligand contact to Mg(2+). Substrate is bound by residues Ser95–His98 and Arg117. His96 functions as the Proton acceptor in the catalytic mechanism. Residue Asp118 participates in Mg(2+) binding. Gln241 is a binding site for substrate. Asp269 contributes to the Mg(2+) binding site. Substrate is bound at residue Glu313 to Gln315. ATP-binding residues include Asp494 and Gly531. Asn532 contributes to the Mg(2+) binding site. Ser534 serves as a coordination point for substrate.

Belongs to the FGAMS family. Monomer. Part of the FGAM synthase complex composed of 1 PurL, 1 PurQ and 2 PurS subunits.

It is found in the cytoplasm. The catalysed reaction is N(2)-formyl-N(1)-(5-phospho-beta-D-ribosyl)glycinamide + L-glutamine + ATP + H2O = 2-formamido-N(1)-(5-O-phospho-beta-D-ribosyl)acetamidine + L-glutamate + ADP + phosphate + H(+). The protein operates within purine metabolism; IMP biosynthesis via de novo pathway; 5-amino-1-(5-phospho-D-ribosyl)imidazole from N(2)-formyl-N(1)-(5-phospho-D-ribosyl)glycinamide: step 1/2. Its function is as follows. Part of the phosphoribosylformylglycinamidine synthase complex involved in the purines biosynthetic pathway. Catalyzes the ATP-dependent conversion of formylglycinamide ribonucleotide (FGAR) and glutamine to yield formylglycinamidine ribonucleotide (FGAM) and glutamate. The FGAM synthase complex is composed of three subunits. PurQ produces an ammonia molecule by converting glutamine to glutamate. PurL transfers the ammonia molecule to FGAR to form FGAM in an ATP-dependent manner. PurS interacts with PurQ and PurL and is thought to assist in the transfer of the ammonia molecule from PurQ to PurL. The sequence is that of Phosphoribosylformylglycinamidine synthase subunit PurL from Rhodopseudomonas palustris (strain BisA53).